A 132-amino-acid chain; its full sequence is C-glycoside deglycosidase beta subunit (132 aa).

This sequence belongs to the C-glycoside deglycosidase beta subunit family. As to quaternary structure, heterodimer composed of an alpha subunit (CarB2) and a beta subunit (CarC2). The cofactor is a divalent metal cation.

The catalysed reaction is 3''-dehydroorientin = 1,5-anhydro-D-erythro-hex-1-en-3-ulose + luteolin. Its activity is regulated as follows. Activity is strongly reduced in the presence of chelating agents. Functionally, carbon-carbon bond-cleaving enzyme which participates in the metabolism of C-glycosides. Acts on the C8-glycosylated compound 3''-dehydroorientin (3''-oxo-orientin). The sequence is that of C-glycoside deglycosidase beta subunit from Arthrobacter globiformis (strain ATCC 8010 / DSM 20124 / JCM 1332 / NBRC 12137 / NCIMB 8907 / NRRL B-2979 / 168).